The chain runs to 387 residues: 3-ketoacyl-CoA thiolase (387 aa).

The Acyl-thioester intermediate role is filled by Cys-91. Catalysis depends on proton acceptor residues His-343 and Cys-373.

The protein belongs to the thiolase-like superfamily. Thiolase family. Heterotetramer of two alpha chains (FadB) and two beta chains (FadA).

The protein localises to the cytoplasm. The catalysed reaction is an acyl-CoA + acetyl-CoA = a 3-oxoacyl-CoA + CoA. It functions in the pathway lipid metabolism; fatty acid beta-oxidation. Catalyzes the final step of fatty acid oxidation in which acetyl-CoA is released and the CoA ester of a fatty acid two carbons shorter is formed. The chain is 3-ketoacyl-CoA thiolase from Pectobacterium carotovorum subsp. carotovorum (strain PC1).